Consider the following 453-residue polypeptide: Armadillo repeat-containing X-linked protein 1 (453 aa).

Residues 1–6 (MGRTRE) lie on the Mitochondrial intermembrane side of the membrane. Mitochondrion outer membrane (MOM)-targeting sequence stretches follow at residues 1 to 6 (MGRTRE) and 26 to 36 (RLAWGRDENEK). A helical; Signal-anchor membrane pass occupies residues 7-29 (AGCVAAGVVIGAGACYCVYRLAW). Residues 30 to 453 (GRDENEKIWD…VKVLKVLTKL (424 aa)) lie on the Cytoplasmic side of the membrane. Residues 140–182 (PSLPCPGGRGGGCHPTRSGSRAGGRASGKSKGKARSKSTRAPA) form a disordered region. The segment covering 167–177 (GKSKGKARSKS) has biased composition (basic residues). ARM repeat units follow at residues 195-235 (PYKI…NNAA), 237-276 (SFNQNAIRELGGVPIIAKLIKTKDPIIREKTYNALNNLSV), 358-398 (PAMT…NIND), and 415-453 (SSLFFLFKESGVCVKKIKALANHNDLVVKVKVLKVLTKL).

It belongs to the eutherian X-chromosome-specific Armcx family. Interacts with MIRO1.

The protein resides in the mitochondrion. It localises to the mitochondrion outer membrane. In terms of biological role, regulates mitochondrial transport during axon regeneration. Increases the proportion of motile mitochondria by recruiting stationary mitochondria into the motile pool. Enhances mitochondria movement and neurite growth in both adult axons and embryonic neurons. Promotes neuronal survival and axon regeneration after nerve injury. May link mitochondria to the Trak1-kinesin motor complex via its interaction with MIRO1. This Pongo abelii (Sumatran orangutan) protein is Armadillo repeat-containing X-linked protein 1 (ARMCX1).